A 325-amino-acid chain; its full sequence is MGQKVNPHGFRLGITSEFTSRWYADKQYKAYVGEDVKIRKMMSKGMERAGISRVDIERTQGRLRVDIHTARPGIVIGRRGAEADRIRGDLEKLTGKQVQLNILEVKNPEIDAQLVAQGVAEQLSSRVSFRRAMRKAMQSAMKSGAKGIRVQCSGRLGGAEMSRSEFYREGRVPLHTLRADIDYGFYEARTNFGRIGVKVWIYKGDIVQSRAEREAQEALLRQQRRERPRRGPRSGSSGTTQGGTDAGRAAARAGDRRGRGGSGGGGGSAEKASAAEKAPAEKPATESAAVEGTPVETPAVTPETTAAPAAVTTAEAQGAPEKAEG.

The KH type-2 domain maps to 38 to 106; it reads IRKMMSKGME…QVQLNILEVK (69 aa). The disordered stretch occupies residues 217-325; that stretch reads EALLRQQRRE…AQGAPEKAEG (109 aa). Basic residues predominate over residues 222 to 232; the sequence is QQRRERPRRGP. The span at 285–316 shows a compositional bias: low complexity; it reads TESAAVEGTPVETPAVTPETTAAPAAVTTAEA.

It belongs to the universal ribosomal protein uS3 family. In terms of assembly, part of the 30S ribosomal subunit. Forms a tight complex with proteins S10 and S14.

Its function is as follows. Binds the lower part of the 30S subunit head. Binds mRNA in the 70S ribosome, positioning it for translation. In Parafrankia sp. (strain EAN1pec), this protein is Small ribosomal subunit protein uS3.